Reading from the N-terminus, the 354-residue chain is MFCSALRNILRNSQNAAKNATITSQIRNLRGQQSVHHEVEVLTSPGITTKQNDKKTEPAECEGSKEVALDFRNREAHVPSFNLAAYVNNSSTLQQFLSLGVDLHSIERRKGLGDFVLKLDFEKNVKPYITFLVDQGVSPDDFGRMFTKNPLLFKEDLDDLQTRVNYLKSKRFSDEARQRILTQNPYWLMFSTRRVDRRLGYFQKEFKLSGHDLRLLATREPNAITYNMEHLRKSVFTLKEEMGFNAKELSDLVVRKPRLLMIPPDDLVERFSYIHQDMGLPHAQIVQCPELLASREFRLRERHEFLKLLGRAQYDPQKDLYISPKTIVEGNNFYFVRNVAKSDLETFDLFLKTR.

The N-terminal 89 residues, 1–89 (MFCSALRNIL…SFNLAAYVNN (89 aa)), are a transit peptide targeting the mitochondrion.

Belongs to the mTERF family.

It localises to the mitochondrion. Functionally, binds promoter DNA and regulates initiation of transcription. Regulator of mitochondrial ribosome biogenesis and translation that is essential for development. Required for normal mitochondrial transcription and translation. Required for assembly of mitochondrial respiratory complexes and normal mitochondrial function. Maintains 16S rRNA levels and functions in mitochondrial ribosome assembly by regulating the biogenesis of the 39S ribosomal subunit. This Drosophila melanogaster (Fruit fly) protein is Transcription termination factor 3, mitochondrial.